We begin with the raw amino-acid sequence, 315 residues long: Protein OPG185 (315 aa).

A signal peptide spans methionine 1–serine 16. In terms of domain architecture, Ig-like V-type spans threonine 17–glutamate 121. The Virion surface segment spans residues threonine 17–glutamate 279. A disulfide bridge connects residues cysteine 34 and cysteine 103. Asparagine 37, asparagine 69, asparagine 112, and asparagine 161 each carry an N-linked (GlcNAc...) asparagine; by host glycan. The segment covering isoleucine 192 to serine 202 has biased composition (polar residues). The segment at isoleucine 192–lysine 214 is disordered. The N-linked (GlcNAc...) asparagine; by host glycan is linked to asparagine 254. The chain crosses the membrane as a helical span at residues isoleucine 280–asparagine 303. Residues lysine 304–valine 315 lie on the Intravirion side of the membrane.

It belongs to the orthopoxvirus OPG185 family. Heterodimerizes with OPG040. The heterodimer OPG185-OPG040 interacts with components of the entry fusion complex OPG143 and OPG094. Heterodimer with C3/VPC protein; disulfide-linked. Glycosylated; contains phosphate and sulfate-substituted glycans. O-glycosylation is required for hemagglutination and hemadsorption activities of infected cell membranes.

The protein resides in the virion membrane. It localises to the host membrane. In terms of biological role, prevents cell to cell fusion by interacting with and directing the viral OPG040 protein on the host plasma membrane. The OPG185-OPG040 complex associates with components of the entry fusion complex (EFC) presumably to avoid superinfection and syncytium formation. Via its interaction with C3/VCP protein, protects the infected cell and probably also the extracellular enveloped virus from complement attack. This Vaccinia virus (strain Tian Tan) (VACV) protein is Protein OPG185 (OPG185).